The sequence spans 146 residues: Nitric oxide reductase subunit C (146 aa).

The helical; Signal-anchor transmembrane segment at 13-29 threads the bilayer; the sequence is IYFGGSVFFFLVFLGLT. Positions 61, 64, and 65 each coordinate heme c.

As to quaternary structure, heterodimer of cytochromes b (large subunit) and c (small subunit).

It is found in the cell membrane. In terms of biological role, component of the anaerobic respiratory chain that transforms nitrate to dinitrogen (denitrification). The chain is Nitric oxide reductase subunit C (norC) from Stutzerimonas stutzeri (Pseudomonas stutzeri).